The primary structure comprises 267 residues: Undecaprenyl-diphosphatase 1 (267 aa).

8 helical membrane-spanning segments follow: residues 6–26 (VLVVALIQGLGEVLPFGAAGL), 41–60 (AALSVAAHAGILLALMIYFW), 83–103 (HLLLHVLAGTIPAAIVGWLVL), 109–129 (LVGQSGAAIILILGGVLLWGC), 142–162 (MSWVGAAGLGALQILSLVPGV), 185–205 (FSMLLAMPLILGHGVKTFWGL), 217–237 (LLMAMATAGLAALIGLAGMMA), and 244–264 (FVPFAILRIGFGIAVLGLVYF).

It belongs to the UppP family.

The protein resides in the cell inner membrane. It carries out the reaction di-trans,octa-cis-undecaprenyl diphosphate + H2O = di-trans,octa-cis-undecaprenyl phosphate + phosphate + H(+). In terms of biological role, catalyzes the dephosphorylation of undecaprenyl diphosphate (UPP). Confers resistance to bacitracin. The sequence is that of Undecaprenyl-diphosphatase 1 from Paramagnetospirillum magneticum (strain ATCC 700264 / AMB-1) (Magnetospirillum magneticum).